A 468-amino-acid polypeptide reads, in one-letter code: Hepatocyte nuclear factor 3-alpha (468 aa).

Positions 169 to 260 (AKPPYSYISL…GNMFENGCYL (92 aa)) form a DNA-binding region, fork-head. The interval 251 to 288 (GNMFENGCYLRRQKRFKCEKQPGAGGGSGGGGSKGGPE) is essential for DNA binding. Residues 269-396 (EKQPGAGGGS…DPHYSFNHPF (128 aa)) form a disordered region. Residues 273 to 285 (GAGGGSGGGGSKG) show a composition bias toward gly residues. A phosphoserine mark is found at S303 and S327. Composition is skewed to low complexity over residues 318–328 (GAPAPGPAASP) and 347–365 (SPAS…ALAS).

As to quaternary structure, binds DNA as a monomer. Interacts with FOXA2. Interacts with NKX2-1. Interacts with HDAC7. Interacts with the histone H3-H4 heterodimer. Associates with nucleosomes containing histone H2A. Interacts with AR. Interacts with NR0B2. Restricted mainly to endoderm-derived tissues (lung, liver, stomach, and small intestine). Expressed in the prostate.

The protein localises to the nucleus. Functionally, transcription factor that is involved in embryonic development, establishment of tissue-specific gene expression and regulation of gene expression in differentiated tissues. Is thought to act as a 'pioneer' factor opening the compacted chromatin for other proteins through interactions with nucleosomal core histones and thereby replacing linker histones at target enhancer and/or promoter sites. Binds DNA with the consensus sequence 5'-[AC]A[AT]T[AG]TT[GT][AG][CT]T[CT]-3'. Proposed to play a role in translating the epigenetic signatures into cell type-specific enhancer-driven transcriptional programs. Involved in the development of multiple endoderm-derived organ systems such as the liver, pancreas, lungs and prostate; FOXA1 and FOXA2 seem to have at least in part redundant roles. Plays a role in prostate morphogenesis and epithelial cell differentiation. FOXA1 and FOXA2 are essential for hepatic specification. FOXA1 and FOXA2 are required for morphogenesis and cell differentiation during formation of the lung. FOXA1 and FOXA2 are involved in bile duct formation; they positively regulate the binding of glucocorticoid receptor/NR3C1 to the IL6 promoter. FOXA1 and FOXA2 regulate multiple phases of midbrain dopaminergic neuron development; they regulate expression of NEUROG2 at the beginning of mDA neurogenesis and of NR4A2 and EN1 in immature mDA neurons. Modulates the transcriptional activity of nuclear hormone receptors. Is involved in ESR1-mediated transcription. Inhibits NKX2-1-mediated transcription from the SFTPC promoter in lung epithel independently from DNA-binding. Involved in regulation of apoptosis. Involved in cell cycle regulation. Originally described as a transcription activator for a number of liver genes such as AFP, albumin, tyrosine aminotransferase, PEPCK, etc. Interacts with the cis-acting regulatory regions of these genes. Involved in glucose homeostasis; activates the GCG promoter. The sequence is that of Hepatocyte nuclear factor 3-alpha (Foxa1) from Mus musculus (Mouse).